The following is a 602-amino-acid chain: Leucine-rich repeat-containing protein 40 (602 aa).

The interval 1-26 (MSRHMRAPRFDPRAGFHAEGKDRGPS) is disordered. Basic and acidic residues predominate over residues 8–24 (PRFDPRAGFHAEGKDRG). The LRR 1 repeat unit spans residues 35–58 (ARSSGQLNLAGRNLGEVPQCVWRI). Ser71 is subject to Phosphoserine. LRR repeat units follow at residues 81 to 103 (QTDL…DLRL), 104 to 126 (LPAL…AIRE), 127 to 149 (LDNL…EITS), 150 to 172 (LKNL…GFEH), 174 to 195 (SCLE…DFAL), 196 to 219 (LSSL…ISRM), 221 to 241 (RLKH…DVGS), 242 to 266 (MESL…SCRQ), 268 to 287 (KELH…HLQH), 288 to 310 (LQAI…EMAL), 311 to 334 (LQSL…LGNL), 336 to 356 (LKFL…IIAK), 398 to 421 (IATL…LFDA), 424 to 447 (TTLI…IVEL), 449 to 470 (EMVL…ELCL), 471 to 494 (LQKL…MSSL), 496 to 517 (KLQT…LYRI), 519 to 540 (TLEA…KMKL), 541 to 564 (MENL…LGNC), and 566 to 587 (QLRT…ILMK).

This Mus musculus (Mouse) protein is Leucine-rich repeat-containing protein 40 (Lrrc40).